A 455-amino-acid polypeptide reads, in one-letter code: Mitochondrial distribution and morphology protein 10 (455 aa).

Disordered stretches follow at residues 216 to 249 (WETT…EDAV), 278 to 311 (IRFS…PSPA), and 377 to 399 (PRSS…PLGE). The segment covering 217 to 227 (ETTNGENGTNT) has biased composition (low complexity). A compositionally biased stretch (polar residues) spans 228–237 (SAPGNASNSR). The span at 291-301 (AQIPPPSPFTP) shows a compositional bias: pro residues.

The protein belongs to the MDM10 family. In terms of assembly, component of the ER-mitochondria encounter structure (ERMES) or MDM complex, composed of MMM1, MDM10, MDM12 and MDM34. Associates with the mitochondrial outer membrane sorting assembly machinery SAM(core) complex.

It localises to the mitochondrion outer membrane. Component of the ERMES/MDM complex, which serves as a molecular tether to connect the endoplasmic reticulum and mitochondria. Components of this complex are involved in the control of mitochondrial shape and protein biogenesis and may function in phospholipid exchange. MDM10 is involved in the late assembly steps of the general translocase of the mitochondrial outer membrane (TOM complex). Functions in the TOM40-specific route of the assembly of outer membrane beta-barrel proteins, including the association of TOM40 with the receptor TOM22 and small TOM proteins. Can associate with the SAM(core) complex as well as the MDM12-MMM1 complex, both involved in late steps of the major beta-barrel assembly pathway, that is responsible for biogenesis of all outer membrane beta-barrel proteins. May act as a switch that shuttles between both complexes and channels precursor proteins into the TOM40-specific pathway. Plays a role in mitochondrial morphology and in the inheritance of mitochondria. This chain is Mitochondrial distribution and morphology protein 10, found in Coprinopsis cinerea (strain Okayama-7 / 130 / ATCC MYA-4618 / FGSC 9003) (Inky cap fungus).